A 168-amino-acid polypeptide reads, in one-letter code: Putative insulin-like growth factor 2 antisense gene protein (168 aa).

Disordered stretches follow at residues 1 to 91 (MSKR…ERSN) and 108 to 168 (PLRR…RPGK). Basic residues-rich tracts occupy residues 59 to 70 (AQRRRGSARRGA) and 159 to 168 (RWRQPGRPGK).

This Homo sapiens (Human) protein is Putative insulin-like growth factor 2 antisense gene protein (IGF2-AS).